A 223-amino-acid chain; its full sequence is MELTLHEARVIGCLLEKEITTPEQYPLSLNSLTLACNQKTSREPVLELSETQVQIAVDSLNRKRLISEQSGFGSRVVKYKHRFCNTEFSELQLSPAALAIVCLLLLRGPQTPGELRTRSNRLHEFKDVIEVEDCIRQLMNREKPFLKQLPREAGRRESRYVELFSAASSQLETAQPESASHTVAHVAVSLDAEPLELTKRVTELEQQVAELTQKLDELIASLS.

Belongs to the UPF0502 family.

In Shewanella baltica (strain OS155 / ATCC BAA-1091), this protein is UPF0502 protein Sbal_1765.